A 77-amino-acid polypeptide reads, in one-letter code: MVEPIVKRPHYRFEIRKKDTKIGKGFSLKELKESGFSVQEAKKLRVRIDKRRKTSYPENVEVLKKLKEQLQQKKQAQ.

Belongs to the eukaryotic ribosomal protein eL13 family.

In Sulfurisphaera tokodaii (strain DSM 16993 / JCM 10545 / NBRC 100140 / 7) (Sulfolobus tokodaii), this protein is Large ribosomal subunit protein eL13.